The following is a 451-amino-acid chain: Phenylalanine--tRNA ligase, mitochondrial (451 aa).

Substrate-binding positions include 157 to 160 (SAHQ), Arg179, 186 to 188 (QHY), and 193 to 195 (QLE). Lys202 is modified (N6-acetyllysine). Substrate is bound by residues Glu287 and Phe312. Residues 358-450 (SKYPAVFNDI…AVQLLGVEGR (93 aa)) form the FDX-ACB domain.

It belongs to the class-II aminoacyl-tRNA synthetase family. In terms of assembly, monomer.

The protein localises to the mitochondrion matrix. Its subcellular location is the mitochondrion. It carries out the reaction tRNA(Phe) + L-phenylalanine + ATP = L-phenylalanyl-tRNA(Phe) + AMP + diphosphate + H(+). Is responsible for the charging of tRNA(Phe) with phenylalanine in mitochondrial translation. To a lesser extent, also catalyzes direct attachment of m-Tyr (an oxidized version of Phe) to tRNA(Phe), thereby opening the way for delivery of the misacylated tRNA to the ribosome and incorporation of ROS-damaged amino acid into proteins. This Mus musculus (Mouse) protein is Phenylalanine--tRNA ligase, mitochondrial (Fars2).